The chain runs to 154 residues: MATFSQKPAEVVKKWVLIDAEDLVVGRLASLVANRLRGKHKATFTPHVDDGDNVIIINADKVVLTGKKYTDKKYYWHTGHPGGIKERTARQILEGRFPERVLEKAIERMIPRGPLGRRQMKNLRVYAGPNHQHEAQQPEVLDVAALNRKNKGNA.

Belongs to the universal ribosomal protein uL13 family. As to quaternary structure, part of the 50S ribosomal subunit.

In terms of biological role, this protein is one of the early assembly proteins of the 50S ribosomal subunit, although it is not seen to bind rRNA by itself. It is important during the early stages of 50S assembly. The chain is Large ribosomal subunit protein uL13 from Brucella canis (strain ATCC 23365 / NCTC 10854 / RM-666).